Here is a 727-residue protein sequence, read N- to C-terminus: Catalase-peroxidase (727 aa).

A cross-link (tryptophyl-tyrosyl-methioninium (Trp-Tyr) (with M-244)) is located at residues 95-218; that stretch reads WHSAGTYRII…LAAVQMGLIY (124 aa). His-96 functions as the Proton acceptor in the catalytic mechanism. Residues 218–244 constitute a cross-link (tryptophyl-tyrosyl-methioninium (Tyr-Met) (with W-95)); that stretch reads YVNPEGPNGEPDVLGAAKDIKESFGKM. Residue His-259 participates in heme b binding.

It belongs to the peroxidase family. Peroxidase/catalase subfamily. Homodimer or homotetramer. The cofactor is heme b. In terms of processing, formation of the three residue Trp-Tyr-Met cross-link is important for the catalase, but not the peroxidase activity of the enzyme.

It carries out the reaction H2O2 + AH2 = A + 2 H2O. The catalysed reaction is 2 H2O2 = O2 + 2 H2O. Functionally, bifunctional enzyme with both catalase and broad-spectrum peroxidase activity. In Persephonella marina (strain DSM 14350 / EX-H1), this protein is Catalase-peroxidase.